A 333-amino-acid chain; its full sequence is MTFPRYILGIDTSCDDTGVGVVELAPDGSVQVRANRVWSQTVHAQYGGVLPELASREHVERIDTVTGDALAEAGLTVGDLAAVAATSGPGLVGALLVGLMYGKGLAQALNVPFYAAHHLEGHIFAAASEADLQAPYLALVVSGGHTHLFDVPREGEYVLVGATRDDAAGEAFDKVARLAGLGYPGGPAISEAARRGDPEAVPFKEPLQGQKGFDFSFSGLKTAALLAHRAGAKPEDLAAGFERAAVRFLVGTTLRAARAYGRETVVVSGGVAANRALREAFAASPVRAVFPGKGLNTDNGAMIALAGAAAIRAGRAPSPLSEGAVAYAPLASV.

Residues His118 and His122 each coordinate Fe cation. Residues 140-144, Asp173, Gly186, and Asn274 contribute to the substrate site; that span reads VVSGG. A Fe cation-binding site is contributed by Asp298.

The protein belongs to the KAE1 / TsaD family. The cofactor is Fe(2+).

It localises to the cytoplasm. The enzyme catalyses L-threonylcarbamoyladenylate + adenosine(37) in tRNA = N(6)-L-threonylcarbamoyladenosine(37) in tRNA + AMP + H(+). Required for the formation of a threonylcarbamoyl group on adenosine at position 37 (t(6)A37) in tRNAs that read codons beginning with adenine. Is involved in the transfer of the threonylcarbamoyl moiety of threonylcarbamoyl-AMP (TC-AMP) to the N6 group of A37, together with TsaE and TsaB. TsaD likely plays a direct catalytic role in this reaction. This Deinococcus geothermalis (strain DSM 11300 / CIP 105573 / AG-3a) protein is tRNA N6-adenosine threonylcarbamoyltransferase.